A 332-amino-acid chain; its full sequence is D-alanine--D-alanine ligase (332 aa).

The span at 1–17 shows a compositional bias: polar residues; it reads MPMTMTQSATNPTATPV. The interval 1–28 is disordered; it reads MPMTMTQSATNPTATPVSANKASANAAT. A compositionally biased stretch (low complexity) spans 18 to 28; it reads SANKASANAAT. In terms of domain architecture, ATP-grasp spans 132 to 329; it reads KQLWHGCGLS…FEQLCWHILA (198 aa). Position 158–213 (158–213) interacts with ATP; that stretch reads VNTLGLPLIVKPVHEGSSIGMSKVNTLDELPKAYEVAAGCGDVVMAEKWITGREFT. Positions 283, 296, and 298 each coordinate Mg(2+).

The protein belongs to the D-alanine--D-alanine ligase family. The cofactor is Mg(2+). It depends on Mn(2+) as a cofactor.

It is found in the cytoplasm. The enzyme catalyses 2 D-alanine + ATP = D-alanyl-D-alanine + ADP + phosphate + H(+). The protein operates within cell wall biogenesis; peptidoglycan biosynthesis. Cell wall formation. This Psychrobacter sp. (strain PRwf-1) protein is D-alanine--D-alanine ligase.